Reading from the N-terminus, the 205-residue chain is Regulator of G-protein signaling 4 (205 aa).

S-palmitoyl cysteine attachment occurs at residues Cys-2, Cys-12, and Cys-95. Positions Ser-62 to Val-178 constitute an RGS domain.

In terms of processing, palmitoylated on Cys-2 and/or Cys-12. Phosphorylated by cyclic GMP-dependent protein kinase.

Functionally, inhibits signal transduction by increasing the GTPase activity of G protein alpha subunits thereby driving them into their inactive GDP-bound form. Activity on G(z)-alpha is inhibited by phosphorylation of the G-protein. Activity on G(z)-alpha and G(i)-alpha-1 is inhibited by palmitoylation of the G-protein. This is Regulator of G-protein signaling 4 (RGS4) from Pongo abelii (Sumatran orangutan).